Consider the following 363-residue polypeptide: G-protein coupled receptor 6 (363 aa).

The Extracellular portion of the chain corresponds to 1–75 (MNASAAALNE…SGLLLSAVNP (75 aa)). N-linked (GlcNAc...) asparagine glycosylation is found at N2 and N9. A disordered region spans residues 28 to 51 (AGTPDTSEWGPPAASAALGGGGGP). An N-linked (GlcNAc...) asparagine glycan is attached at N52. Residues 76-95 (WDVLLCVSGTVIAGENALVV) traverse the membrane as a helical segment. Residues 96-107 (ALIASTPALRTP) lie on the Cytoplasmic side of the membrane. The helical transmembrane segment at 108 to 131 (MFVLVGSLATADLLAGCGLILHFV) threads the bilayer. Topologically, residues 132 to 143 (FQYVVPSETVSL) are extracellular. Residues 144 to 165 (LMVGFLVASFAASVSSLLAITV) traverse the membrane as a helical segment. The Cytoplasmic segment spans residues 166–186 (DRYLSLYNALTYYSRRTLLGV). The helical transmembrane segment at 187-206 (HLLLAATWTVSLGLGLLPVL) threads the bilayer. Over 207-231 (GWNCLADRASCSVVRPLTRSHVALL) the chain is Extracellular. The chain crosses the membrane as a helical span at residues 232-250 (STSFFVVFGIMLHLYVRIC). Residues 251–278 (QVVWRHAHQIALQQHCLAPPHLAATRKG) are Cytoplasmic-facing. The helical transmembrane segment at 279 to 305 (VGTLAVVLGTFGASWLPFAIYCVVGSQ) threads the bilayer. The Extracellular segment spans residues 306–310 (EDPAI). A helical membrane pass occupies residues 311–332 (YTYATLLPATYNSMINPIIYAF). The Cytoplasmic segment spans residues 333–363 (RNQEIQRALWLLFCGCFQSKVPFRSRSPSEV). C346 is lipidated: S-palmitoyl cysteine. 3 positions are modified to phosphoserine: S357, S359, and S361.

Belongs to the G-protein coupled receptor 1 family. In terms of tissue distribution, expressed in the brain, with a prominent distribution in striatum.

Its subcellular location is the cell membrane. Its function is as follows. Orphan receptor with constitutive G(s) signaling activity that activate cyclic AMP. Promotes neurite outgrowth and blocks myelin inhibition in neurons. In Rattus norvegicus (Rat), this protein is G-protein coupled receptor 6 (Gpr6).